Here is a 225-residue protein sequence, read N- to C-terminus: MNKWVIGIDLSTTITGVAILRNEQIIKTFAVAFDNFNEKNLYNNVIRLIKEINLNVWLLADDDYYIGIEVANFSNPKLTQRFSIYAGMIIALMSQVLRDFNAEFKMFNANAWQLKIPQIQYNTLRKDRKLITKNLMIKTFNIKSNLNEDEYDALAIAYFYDSINSTLEQEEITKAKKIVKMNKVKQQLSISKKINKLLEKKSKLKKATAISKVDEQIEELKKLNK.

This is an uncharacterized protein from Ureaplasma parvum serovar 3 (strain ATCC 700970).